The chain runs to 514 residues: Major facilitator superfamily domain-containing protein 4A (514 aa).

5 helical membrane-spanning segments follow: residues 19-39 (LTYWSVFFSFGLCIAFLGPTL), 53-73 (ISWVFLSQQLCLLLGSALGGV), 82-102 (LWALFTSSLAISLVFAVIPFC), 107-127 (VLALVMALAGLAMGCIDTVAN), and 139-159 (AVFLQVLHFFVGFGALLSPLI). 2 N-linked (GlcNAc...) asparagine glycosylation sites follow: asparagine 177 and asparagine 203. A run of 7 helical transmembrane segments spans residues 221–241 (YAFWIMALINLPVPMAVLMLL), 307–327 (FFAIHITAALVLFMTDGLTGA), 347–367 (VAGYLPSLFWGFITLGRLLSI), 376–396 (ATMVFINVVGVVVTFLVLLIF), 400–420 (VVFLFVGTASLGLFLSSTFPS), 438–458 (VLVTGAGVGEMVLQMLVGSIF), and 466–486 (FLVCGVIFGCLAFTFYILLLF).

It belongs to the major facilitator superfamily.

The protein resides in the membrane. The polypeptide is Major facilitator superfamily domain-containing protein 4A (MFSD4A) (Pongo abelii (Sumatran orangutan)).